A 243-amino-acid chain; its full sequence is Asnovolin H synthase nvfL (243 aa).

7 consecutive transmembrane segments (helical) span residues 20 to 42 (ANTL…AYYS), 51 to 71 (ALIP…IHCP), 75 to 95 (FVRI…YAAI), 112 to 132 (LPFI…ALAA), 138 to 160 (IAFV…SQLL), 169 to 189 (SYVV…MVTI), and 205 to 225 (LLLW…FCFY).

Belongs to the paxB family.

Its subcellular location is the membrane. It catalyses the reaction (3R)-[(10S)-11-epoxyfarnesyl]-2,3,5-trimethyl-6-oxido-4-oxocyclohexa-1,5-diene-1-carboxylate + H(+) = asnovolin H. Its pathway is secondary metabolite biosynthesis; terpenoid biosynthesis. Terpene cyclase; part of the gene cluster that mediates the biosynthesis of novofumigatonin, a heavily oxygenated meroterpenoid containing a unique orthoester moiety. The first step of the pathway is the synthesis of 3,5-dimethylorsellinic acid (DMOA) by the polyketide synthase nvfA via condensation of one acetyl-CoA starter unit with 3 malonyl-CoA units and 2 methylations. DMOA is then converted to farnesyl-DMOA by the farnesyltransferase nvfB. Epoxydation by FAD-dependent monooxygenase nvfK, followed by a protonation-initiated cyclization catalyzed by the terpene cyclase nvfL leads to the production of asnavolin H. The short chain dehydrogenase nvfC then as a 3-OH dehydrogenase of asnovolin H to yield chemesin D. There are two branches to synthesize asnovolin A from chemesin D. In one branch, chemesin D undergoes Baeyer-Villiger oxidation by nvfH, methylation by nvfJ, and enoyl reduction by the nvfM D enoylreductase that reduces the double bond between C-5'and C-6', to form respectively asnovolin I, asnovolin K, and asnovolin A. In the other branch, the methylation precedes the Baeyer-Villiger oxidation and the enoyl reduction to yield asnovolin A via the asnovolin J intermediate. Asnovolin A is further converted to fumigatonoid A by the Fe(II)/2-oxoglutarate-dependent dioxygenase nvfI that catalyzes an endoperoxidation reaction. The alpha/beta hydrolase nvfD then acts as an epimerase that converts fumigatonoid A to its C-5' epimer, which then undergoes spontaneous or nvfD-catalyzed lactonization. The following step utilizes the ketoreductase nvfG to produce fumigatonoid B. The dioxygenase nvfE further converts fumigatonoid B into fumigatonoid C. Finally the Fe(II)/2-oxoglutarate-dependent dioxygenase nvfF catalyzes two rounds of oxidation to transform fumigatonoid C into the end product, novofumigatonin A. The polypeptide is Asnovolin H synthase nvfL (Aspergillus novofumigatus (strain IBT 16806)).